The chain runs to 235 residues: Rab-like protein 3 (235 aa).

The interval 1–235 (MASLDRVKVL…GGNFKSLHYD (235 aa)) is small GTPase-like. Residues 16 to 21 (GVGKSS), 148 to 150 (KLD), and 179 to 180 (DC) each bind GTP.

It belongs to the small GTPase superfamily. Rab family. In terms of assembly, homodimer.

Functionally, required for KRAS signaling regulation and modulation of cell proliferation. Regulator of KRAS prenylation, and probably prenylation of other small GTPases. Required for lymphocyte development and function. Not required for myeloid cell development. The polypeptide is Rab-like protein 3 (rabl3) (Xenopus tropicalis (Western clawed frog)).